Reading from the N-terminus, the 191-residue chain is Ankyrin repeat domain-containing protein 22 (191 aa).

ANK repeat units lie at residues 39 to 68, 72 to 100, 101 to 130, and 134 to 163; these read NGDTPLICACRRGHLRIVSFLLRRNADVNL, KERTCLHYAVKKRFTFFDYLLIILLMPVL, LIGYFLMVSKTKQNETLVRMLLNAGVEVNA, and DGYTALHYACQMKNQTLIPLLLEAHADPMI.

This Mus musculus (Mouse) protein is Ankyrin repeat domain-containing protein 22 (Ankrd22).